Reading from the N-terminus, the 2092-residue chain is Nonribosomal peptide synthetase echPS (2092 aa).

The adenylation 1 stretch occupies residues 13-406; it reads FSQRCCQNPD…GRRDRVTKIR (394 aa). In terms of domain architecture, Carrier 1 spans 524 to 600; that stretch reads SGPLTIGQAI…SLIEKSRHET (77 aa). The residue at position 561 (serine 561) is an O-(pantetheine 4'-phosphoryl)serine. The disordered stretch occupies residues 596 to 626; that stretch reads SRHETEDTPDSSAFATRTPEESSMPTQGPVT. A compositionally biased stretch (polar residues) spans 605-624; sequence DSSAFATRTPEESSMPTQGP. The condensation 1 stretch occupies residues 624–1017; sequence PVTPLQKRMV…YTSLLDAFLD (394 aa). The interval 1068-1446 is adenylation 2; that stretch reads ASLYPTHVAV…GRKDRQVKVR (379 aa). A Carrier 2 domain is found at 1544 to 1622; it reads IKTTHLEKLI…DLVILVAQQQ (79 aa). An O-(pantetheine 4'-phosphoryl)serine modification is found at serine 1582. Residues 1663 to 2047 form a condensation 2 region; that stretch reads SQSQSTFNVS…EALLLECFRI (385 aa).

Belongs to the NRP synthetase family. Pantetheine 4'-phosphate serves as cofactor.

It carries out the reaction L-tryptophan + L-alanine + 2 ATP = cyclo(L-tryptophyl-L-alanyl) + 2 ADP + 2 phosphate + 2 H(+). The protein operates within secondary metabolite biosynthesis. Its pathway is alkaloid biosynthesis. Nonribosomal peptide synthetase; part of the gene cluster that mediates the biosynthesis of echinulin family alkaloid. The pathway begins with the biosynthesis of the cyclic dipeptide cyclo-L-Trp-L-Ala (cyclo-TA) by the NRPS echPS via condensation of L-alanine and L-tryptophan. The prenyltransferase echPT1 then catalyzes the first prenylation step, a reverse prenylation reaction at C2, to yield preechinulin. Preechinulin is the substrate of the cytochrome P450 monooxygenase echP450 that catalyzes the formation of the double bond between C10 and C11 to produce neoechulin A. The unique prenyltransferase echPT2 functions as a competitive enzyme with echP450 for preechinulin metabolization and uses preechinulin for effective regiospecific prenylations. Preechinulin is prenylated by echPT2 at C5 or C7. C7-prenylation leads to accumulation of tardioxopiperazine B without further modification by echPT2. In contrast, the C5-prenylated tardioxopiperazine A can be prenylated again by echPT2, predominantly at C7 to form echinulin or less frequently at C4 to give variecolorin L. EchPT2 also accepts neoechilunin A to produce varlecolorin G (prenylation at C5) or isoechinulin A (prenylation at C7). EchPT2 further converts isoechinulin A into dehydroechinulin. Moreover, a yet unidentified enzyme can also convert neoechilunin A into neoechilunin B by introducing a double bond between positions C14 and C17 and thus provides a further substrate to echPT2 for C5 and C7 prenylation. The protein is Nonribosomal peptide synthetase echPS of Aspergillus ruber (strain CBS 135680).